The following is a 949-amino-acid chain: Isoleucine--tRNA ligase (949 aa).

The 'HIGH' region signature appears at 58–68 (PYANGDIHIGH). L-isoleucyl-5'-AMP is bound at residue Glu-567. Residues 608–612 (KMSKS) carry the 'KMSKS' region motif. Position 611 (Lys-611) interacts with ATP. 4 residues coordinate Zn(2+): Cys-912, Cys-915, Cys-932, and Cys-935.

The protein belongs to the class-I aminoacyl-tRNA synthetase family. IleS type 1 subfamily. Monomer. The cofactor is Zn(2+).

The protein localises to the cytoplasm. It catalyses the reaction tRNA(Ile) + L-isoleucine + ATP = L-isoleucyl-tRNA(Ile) + AMP + diphosphate. Catalyzes the attachment of isoleucine to tRNA(Ile). As IleRS can inadvertently accommodate and process structurally similar amino acids such as valine, to avoid such errors it has two additional distinct tRNA(Ile)-dependent editing activities. One activity is designated as 'pretransfer' editing and involves the hydrolysis of activated Val-AMP. The other activity is designated 'posttransfer' editing and involves deacylation of mischarged Val-tRNA(Ile). This chain is Isoleucine--tRNA ligase, found in Vibrio cholerae serotype O1 (strain ATCC 39315 / El Tor Inaba N16961).